Reading from the N-terminus, the 400-residue chain is Probable aspartate/prephenate aminotransferase (400 aa).

Residues G39, W125, and N175 each contribute to the L-aspartate site. An N6-(pyridoxal phosphate)lysine modification is found at K239. An L-aspartate-binding site is contributed by R375.

The protein belongs to the class-I pyridoxal-phosphate-dependent aminotransferase family. In terms of assembly, homodimer. Pyridoxal 5'-phosphate serves as cofactor.

Its subcellular location is the cytoplasm. The catalysed reaction is L-aspartate + 2-oxoglutarate = oxaloacetate + L-glutamate. The enzyme catalyses L-arogenate + 2-oxoglutarate = prephenate + L-glutamate. Its function is as follows. Catalyzes the reversible conversion of aspartate and 2-oxoglutarate to glutamate and oxaloacetate. Can also transaminate prephenate in the presence of glutamate. The polypeptide is Probable aspartate/prephenate aminotransferase (aspC) (Rhizobium leguminosarum bv. phaseoli).